The sequence spans 647 residues: Threonine--tRNA ligase (647 aa).

In terms of domain architecture, TGS spans 1-61 (MIKITFPDGA…EEDGSIEIVT (61 aa)). The tract at residues 240 to 538 (DHRKLGKELD…LIETYKGAFP (299 aa)) is catalytic. Residues C334, H385, and H515 each coordinate Zn(2+).

It belongs to the class-II aminoacyl-tRNA synthetase family. Homodimer. Zn(2+) serves as cofactor.

It is found in the cytoplasm. It carries out the reaction tRNA(Thr) + L-threonine + ATP = L-threonyl-tRNA(Thr) + AMP + diphosphate + H(+). Functionally, catalyzes the attachment of threonine to tRNA(Thr) in a two-step reaction: L-threonine is first activated by ATP to form Thr-AMP and then transferred to the acceptor end of tRNA(Thr). Also edits incorrectly charged L-seryl-tRNA(Thr). The chain is Threonine--tRNA ligase from Streptococcus pyogenes serotype M1.